We begin with the raw amino-acid sequence, 120 residues long: NAD(P)H-quinone oxidoreductase subunit 3, chloroplastic (120 aa).

The next 3 helical transmembrane spans lie at 9 to 29, 64 to 84, and 88 to 108; these read IFWAFLMISSVIPILAFLISG, MFALVFVVFDVETVFLYPWAM, and VLGVSAFIEALIFVLIPIVGS.

It belongs to the complex I subunit 3 family. As to quaternary structure, NDH is composed of at least 16 different subunits, 5 of which are encoded in the nucleus.

It is found in the plastid. The protein localises to the chloroplast thylakoid membrane. The enzyme catalyses a plastoquinone + NADH + (n+1) H(+)(in) = a plastoquinol + NAD(+) + n H(+)(out). The catalysed reaction is a plastoquinone + NADPH + (n+1) H(+)(in) = a plastoquinol + NADP(+) + n H(+)(out). NDH shuttles electrons from NAD(P)H:plastoquinone, via FMN and iron-sulfur (Fe-S) centers, to quinones in the photosynthetic chain and possibly in a chloroplast respiratory chain. The immediate electron acceptor for the enzyme in this species is believed to be plastoquinone. Couples the redox reaction to proton translocation, and thus conserves the redox energy in a proton gradient. The protein is NAD(P)H-quinone oxidoreductase subunit 3, chloroplastic of Illicium oligandrum (Star anise).